The following is a 230-amino-acid chain: 6-carboxyhexanoate--CoA ligase (230 aa).

Belongs to the BioW family. In terms of assembly, homodimer. Mg(2+) serves as cofactor.

It catalyses the reaction heptanedioate + ATP + CoA = 6-carboxyhexanoyl-CoA + AMP + diphosphate. It participates in metabolic intermediate metabolism; pimeloyl-CoA biosynthesis; pimeloyl-CoA from pimelate: step 1/1. In terms of biological role, catalyzes the transformation of pimelate into pimeloyl-CoA with concomitant hydrolysis of ATP to AMP. This Staphylococcus aureus (strain Mu3 / ATCC 700698) protein is 6-carboxyhexanoate--CoA ligase.